The chain runs to 249 residues: 5'-nucleotidase SurE (249 aa).

Positions 9, 10, 40, and 92 each coordinate a divalent metal cation.

The protein belongs to the SurE nucleotidase family. It depends on a divalent metal cation as a cofactor.

The protein resides in the cytoplasm. The enzyme catalyses a ribonucleoside 5'-phosphate + H2O = a ribonucleoside + phosphate. Its function is as follows. Nucleotidase that shows phosphatase activity on nucleoside 5'-monophosphates. This Shewanella sp. (strain ANA-3) protein is 5'-nucleotidase SurE.